The primary structure comprises 142 residues: Large ribosomal subunit protein uL11 (142 aa).

Belongs to the universal ribosomal protein uL11 family. In terms of assembly, part of the ribosomal stalk of the 50S ribosomal subunit. Interacts with L10 and the large rRNA to form the base of the stalk. L10 forms an elongated spine to which L12 dimers bind in a sequential fashion forming a multimeric L10(L12)X complex. Post-translationally, one or more lysine residues are methylated.

Its function is as follows. Forms part of the ribosomal stalk which helps the ribosome interact with GTP-bound translation factors. This is Large ribosomal subunit protein uL11 from Hahella chejuensis (strain KCTC 2396).